Reading from the N-terminus, the 323-residue chain is Ribonuclease Z (323 aa).

7 residues coordinate Zn(2+): His62, His64, Asp66, His67, His144, Asp215, and His273. The active-site Proton acceptor is the Asp66.

It belongs to the RNase Z family. As to quaternary structure, homodimer. Zn(2+) serves as cofactor.

The catalysed reaction is Endonucleolytic cleavage of RNA, removing extra 3' nucleotides from tRNA precursor, generating 3' termini of tRNAs. A 3'-hydroxy group is left at the tRNA terminus and a 5'-phosphoryl group is left at the trailer molecule.. Zinc phosphodiesterase, which displays some tRNA 3'-processing endonuclease activity. Probably involved in tRNA maturation, by removing a 3'-trailer from precursor tRNA. This chain is Ribonuclease Z, found in Synechococcus sp. (strain WH7803).